The sequence spans 446 residues: tRNA-2-methylthio-N(6)-dimethylallyladenosine synthase (446 aa).

One can recognise an MTTase N-terminal domain in the interval 3-119; sequence KKIFIKTFGC…INEAILNHLK (117 aa). Positions 12, 48, 82, 158, 162, and 165 each coordinate [4Fe-4S] cluster. Residues 144–374 enclose the Radical SAM core domain; sequence KDSKVSSFLT…QEKLFNNQIK (231 aa). The TRAM domain occupies 377–439; the sequence is KSLENKILNV…QNSLFGKLTE (63 aa).

Belongs to the methylthiotransferase family. MiaB subfamily. As to quaternary structure, monomer. It depends on [4Fe-4S] cluster as a cofactor.

The protein resides in the cytoplasm. The enzyme catalyses N(6)-dimethylallyladenosine(37) in tRNA + (sulfur carrier)-SH + AH2 + 2 S-adenosyl-L-methionine = 2-methylsulfanyl-N(6)-dimethylallyladenosine(37) in tRNA + (sulfur carrier)-H + 5'-deoxyadenosine + L-methionine + A + S-adenosyl-L-homocysteine + 2 H(+). Functionally, catalyzes the methylthiolation of N6-(dimethylallyl)adenosine (i(6)A), leading to the formation of 2-methylthio-N6-(dimethylallyl)adenosine (ms(2)i(6)A) at position 37 in tRNAs that read codons beginning with uridine. This Pelagibacter ubique (strain HTCC1062) protein is tRNA-2-methylthio-N(6)-dimethylallyladenosine synthase.